We begin with the raw amino-acid sequence, 351 residues long: Molybdate-binding protein MolA (351 aa).

The first 21 residues, 1–21, serve as a signal peptide directing secretion; sequence MKLKSLLIACLLSSLSFSALA. Residues 41–322 form the Fe/B12 periplasmic-binding domain; the sequence is RAVVLQHQTL…WLAKALYPQR (282 aa). Residues 47–48, Y217, R264, and 300–301 each bind molybdate; these read HQ and GY.

It belongs to the bacterial solute-binding protein 8 family. The complex is composed of two ATP-binding proteins (MolC), two transmembrane proteins (MolB) and a solute-binding protein (MolA).

Its subcellular location is the periplasm. The MolBCA complex shows a decrease in affinity in the presence of increasing concentrations of substrate and nucleotide. Part of the ABC transporter complex MolBCA involved in molybdate import. Functions as a low-affinity molybdate transporter. Binds to both molybdate and tungstate, but not to sulfate or phosphate. In Haemophilus influenzae (strain ATCC 51907 / DSM 11121 / KW20 / Rd), this protein is Molybdate-binding protein MolA.